We begin with the raw amino-acid sequence, 156 residues long: Ribosomal RNA large subunit methyltransferase H (156 aa).

Residues L73, G104, and 123–128 each bind S-adenosyl-L-methionine; that span reads LSPLTL.

Belongs to the RNA methyltransferase RlmH family. As to quaternary structure, homodimer.

Its subcellular location is the cytoplasm. It catalyses the reaction pseudouridine(1915) in 23S rRNA + S-adenosyl-L-methionine = N(3)-methylpseudouridine(1915) in 23S rRNA + S-adenosyl-L-homocysteine + H(+). Its function is as follows. Specifically methylates the pseudouridine at position 1915 (m3Psi1915) in 23S rRNA. The sequence is that of Ribosomal RNA large subunit methyltransferase H from Serratia proteamaculans (strain 568).